The primary structure comprises 148 residues: DNA-directed RNA polymerase II subunit GRINL1A, isoforms 4/5 (148 aa).

Residues 1–66 form a disordered region; it reads MATPARAPES…AEFGGAAGNV (66 aa). Residues 53–66 show a composition bias toward low complexity; it reads GLGAAEFGGAAGNV.

This chain is DNA-directed RNA polymerase II subunit GRINL1A, isoforms 4/5 (POLR2M), found in Homo sapiens (Human).